The chain runs to 152 residues: Large ribosomal subunit protein uL15 (152 aa).

The disordered stretch occupies residues 1-57 (MTSTLNTLKSNSGSRKKKLRKGRGIAAGQGASCGFGMRGQKSRSGRPTRPGFEGGQM). Residues 14–23 (SRKKKLRKGR) show a composition bias toward basic residues. Positions 25-37 (IAAGQGASCGFGM) are enriched in gly residues.

This sequence belongs to the universal ribosomal protein uL15 family. As to quaternary structure, part of the 50S ribosomal subunit.

Binds to the 23S rRNA. This chain is Large ribosomal subunit protein uL15, found in Prochlorococcus marinus (strain MIT 9312).